The primary structure comprises 572 residues: Proline--tRNA ligase (572 aa).

It belongs to the class-II aminoacyl-tRNA synthetase family. ProS type 1 subfamily. As to quaternary structure, homodimer.

The protein localises to the cytoplasm. The catalysed reaction is tRNA(Pro) + L-proline + ATP = L-prolyl-tRNA(Pro) + AMP + diphosphate. Functionally, catalyzes the attachment of proline to tRNA(Pro) in a two-step reaction: proline is first activated by ATP to form Pro-AMP and then transferred to the acceptor end of tRNA(Pro). As ProRS can inadvertently accommodate and process non-cognate amino acids such as alanine and cysteine, to avoid such errors it has two additional distinct editing activities against alanine. One activity is designated as 'pretransfer' editing and involves the tRNA(Pro)-independent hydrolysis of activated Ala-AMP. The other activity is designated 'posttransfer' editing and involves deacylation of mischarged Ala-tRNA(Pro). The misacylated Cys-tRNA(Pro) is not edited by ProRS. This Salmonella choleraesuis (strain SC-B67) protein is Proline--tRNA ligase.